Reading from the N-terminus, the 551-residue chain is Cytosolic Fe-S cluster assembly factor NAR1 (551 aa).

Residues Cys20, Cys57, Cys60, Cys63, Cys178, and Cys242 each coordinate [4Fe-4S] cluster. The disordered stretch occupies residues Asp395 to Gly435. The segment covering Glu421–Ser431 has biased composition (polar residues). [4Fe-4S] cluster is bound at residue Cys451.

It belongs to the NARF family.

Its function is as follows. Component of the cytosolic Fe/S protein assembly machinery. Required for maturation of extramitochondrial Fe/S proteins. May play a role in the transfer of pre-assembled Fe/S clusters to target apoproteins. This chain is Cytosolic Fe-S cluster assembly factor NAR1 (NAR1), found in Candida glabrata (strain ATCC 2001 / BCRC 20586 / JCM 3761 / NBRC 0622 / NRRL Y-65 / CBS 138) (Yeast).